Reading from the N-terminus, the 330-residue chain is Reaction center protein M chain (330 aa).

The next 3 helical transmembrane spans lie at 57 to 83, 115 to 144, and 147 to 172; these read GWTS…AQVG, GGWY…EQHK, and KHIF…ILMG. Histidine 185 and histidine 205 together coordinate (7R,8Z)-bacteriochlorophyll b. Residues 202–230 form a helical membrane-spanning segment; it reads NPFHCLSIVFLYGSVLLFCMHGGTILAVT. Residues histidine 222 and glutamate 237 each coordinate Fe cation. Tryptophan 255 contributes to the a ubiquinone binding site. Residues 264–290 traverse the membrane as a helical segment; it reads TMEGIHRWAWWFAVLTPITGGIGILLT. Histidine 269 is a Fe cation binding site.

This sequence belongs to the reaction center PufL/M/PsbA/D family. In terms of assembly, reaction center is composed of four bacteriochlorophylls, two bacteriopheophytins, two ubiquinones, one iron, and two highly hydrophobic polypeptide chains (designated L and M).

The protein localises to the cellular chromatophore membrane. In terms of biological role, the reaction center is a membrane-bound complex that mediates the initial photochemical event in the electron transfer process of photosynthesis. In Roseobacter denitrificans (strain ATCC 33942 / OCh 114) (Erythrobacter sp. (strain OCh 114)), this protein is Reaction center protein M chain (pufM).